Consider the following 968-residue polypeptide: Alanine--tRNA ligase, cytoplasmic (968 aa).

An N-acetylmethionine modification is found at Met1. Ser3 and Ser8 each carry phosphoserine. Residue Lys19 is modified to N6-acetyllysine. Residues Arg77, His95, Trp176, and 214–216 (IWN) each bind ATP. L-alanine is bound by residues Asn216 and Asp239. Gly243 contacts ATP. Phosphoserine is present on residues Ser399 and Ser555. Zn(2+)-binding residues include His605, His609, Cys723, and His727. A Nuclear localization signal motif is present at residues 750–763 (RRIVAVTGAEAQKA). N6-acetyllysine is present on Lys876. The residue at position 943 (Lys943) is an N6,N6,N6-trimethyllysine; alternate. N6,N6-dimethyllysine; alternate is present on Lys943. At Lys943 the chain carries N6-methyllysine; alternate.

This sequence belongs to the class-II aminoacyl-tRNA synthetase family. Monomer. Interacts with ANKRD16; the interaction is direct. The cofactor is Zn(2+). In terms of processing, ISGylated. Post-translationally, methylation at 'Lys-943' by METTL21C.

The protein localises to the cytoplasm. It is found in the nucleus. The enzyme catalyses tRNA(Ala) + L-alanine + ATP = L-alanyl-tRNA(Ala) + AMP + diphosphate. The catalysed reaction is (S)-lactate + ATP + H(+) = (S)-lactoyl-AMP + diphosphate. It catalyses the reaction (S)-lactoyl-AMP + L-lysyl-[protein] = N(6)-[(S)-lactoyl]-L-lysyl-[protein] + AMP + 2 H(+). The protein lactyltransferase activity is inhibited by beta-alanine. Its function is as follows. Catalyzes the attachment of alanine to tRNA(Ala) in a two-step reaction: alanine is first activated by ATP to form Ala-AMP and then transferred to the acceptor end of tRNA(Ala). Also edits incorrectly charged tRNA(Ala) via its editing domain. In presence of high levels of lactate, also acts as a protein lactyltransferase that mediates lactylation of lysine residues in target proteins, such as TEAD1, TP53/p53 and YAP1. Protein lactylation takes place in a two-step reaction: lactate is first activated by ATP to form lactate-AMP and then transferred to lysine residues of target proteins. Acts as an inhibitor of TP53/p53 activity by catalyzing lactylation of TP53/p53. Acts as a positive regulator of the Hippo pathway by mediating lactylation of TEAD1 and YAP1. The polypeptide is Alanine--tRNA ligase, cytoplasmic (Homo sapiens (Human)).